The sequence spans 595 residues: Aspartate--tRNA ligase (595 aa).

Residue Glu-171 participates in L-aspartate binding. The tract at residues 195–198 is aspartate; it reads QLFK. Arg-217 serves as a coordination point for L-aspartate. ATP contacts are provided by residues 217 to 219 and Gln-226; that span reads RDE. Residue His-448 coordinates L-aspartate. An ATP-binding site is contributed by Glu-482. Arg-489 is a binding site for L-aspartate. An ATP-binding site is contributed by 534 to 537; it reads GLDR.

It belongs to the class-II aminoacyl-tRNA synthetase family. Type 1 subfamily. As to quaternary structure, homodimer.

It is found in the cytoplasm. It catalyses the reaction tRNA(Asp) + L-aspartate + ATP = L-aspartyl-tRNA(Asp) + AMP + diphosphate. Its function is as follows. Catalyzes the attachment of L-aspartate to tRNA(Asp) in a two-step reaction: L-aspartate is first activated by ATP to form Asp-AMP and then transferred to the acceptor end of tRNA(Asp). This chain is Aspartate--tRNA ligase, found in Erwinia tasmaniensis (strain DSM 17950 / CFBP 7177 / CIP 109463 / NCPPB 4357 / Et1/99).